The primary structure comprises 264 residues: Thymidylate synthase (264 aa).

Arg21 is a dUMP binding site. Residue His51 coordinates (6R)-5,10-methylene-5,6,7,8-tetrahydrofolate. 126–127 (RR) lines the dUMP pocket. Cys146 functions as the Nucleophile in the catalytic mechanism. Residues 166–169 (RSAD), Asn177, and 207–209 (HLY) contribute to the dUMP site. Residue Asp169 participates in (6R)-5,10-methylene-5,6,7,8-tetrahydrofolate binding. Position 263 (Ala263) interacts with (6R)-5,10-methylene-5,6,7,8-tetrahydrofolate.

This sequence belongs to the thymidylate synthase family. Bacterial-type ThyA subfamily. As to quaternary structure, homodimer.

Its subcellular location is the cytoplasm. The catalysed reaction is dUMP + (6R)-5,10-methylene-5,6,7,8-tetrahydrofolate = 7,8-dihydrofolate + dTMP. Its pathway is pyrimidine metabolism; dTTP biosynthesis. Its function is as follows. Catalyzes the reductive methylation of 2'-deoxyuridine-5'-monophosphate (dUMP) to 2'-deoxythymidine-5'-monophosphate (dTMP) while utilizing 5,10-methylenetetrahydrofolate (mTHF) as the methyl donor and reductant in the reaction, yielding dihydrofolate (DHF) as a by-product. This enzymatic reaction provides an intracellular de novo source of dTMP, an essential precursor for DNA biosynthesis. In Polynucleobacter asymbioticus (strain DSM 18221 / CIP 109841 / QLW-P1DMWA-1) (Polynucleobacter necessarius subsp. asymbioticus), this protein is Thymidylate synthase.